A 460-amino-acid polypeptide reads, in one-letter code: Lipase member H-B (460 aa).

The N-terminal stretch at 1–26 (MLLSFYFNGLLLVGCLLSWGRSDTEG) is a signal peptide. N-linked (GlcNAc...) asparagine glycosylation is found at asparagine 67 and asparagine 75. The active-site Nucleophile is serine 163. The N-linked (GlcNAc...) asparagine glycan is linked to asparagine 177. Residue aspartate 187 is the Charge relay system of the active site. Residues cysteine 242 and cysteine 255 are joined by a disulfide bond. Histidine 257 functions as the Charge relay system in the catalytic mechanism. 2 cysteine pairs are disulfide-bonded: cysteine 279–cysteine 290 and cysteine 293–cysteine 301. N-linked (GlcNAc...) asparagine glycosylation is present at asparagine 289. Residue asparagine 366 is glycosylated (N-linked (GlcNAc...) asparagine). The cysteines at positions 436 and 455 are disulfide-linked.

The protein belongs to the AB hydrolase superfamily. Lipase family.

Its subcellular location is the secreted. The protein resides in the cell membrane. It catalyses the reaction 1-hexadecanoyl-2-(9Z-octadecenoyl)-sn-glycero-3-phosphate + H2O = 2-(9Z-octadecenoyl)-sn-glycero-3-phosphate + hexadecanoate + H(+). Its function is as follows. Hydrolyzes specifically phosphatidic acid (PA) to produce 2-acyl lysophosphatidic acid (LPA; a potent bioactive lipid mediator) and fatty acid. Does not hydrolyze other phospholipids, like phosphatidylserine (PS), phosphatidylcholine (PC) and phosphatidylethanolamine (PE) or triacylglycerol (TG). The chain is Lipase member H-B (liph-b) from Xenopus laevis (African clawed frog).